The chain runs to 226 residues: UPF0758 protein SAK_1186 (226 aa).

Residues 103-225 (QILSSEQLAR…YYSFREEADI (123 aa)) enclose the MPN domain. His174, His176, and Asp187 together coordinate Zn(2+). The short motif at 174-187 (HNHPSGSPKPSESD) is the JAMM motif element.

This sequence belongs to the UPF0758 family.

The chain is UPF0758 protein SAK_1186 from Streptococcus agalactiae serotype Ia (strain ATCC 27591 / A909 / CDC SS700).